The chain runs to 101 residues: uncharacterized protein (101 aa).

A helical membrane pass occupies residues Val-77 to Ile-99.

The protein resides in the membrane. This is an uncharacterized protein from Acanthamoeba polyphaga mimivirus (APMV).